The following is a 514-amino-acid chain: Maturase K (514 aa).

This sequence belongs to the intron maturase 2 family. MatK subfamily.

It localises to the plastid. The protein resides in the chloroplast. Functionally, usually encoded in the trnK tRNA gene intron. Probably assists in splicing its own and other chloroplast group II introns. This Plantago argentea (Silver plantain) protein is Maturase K.